Here is a 196-residue protein sequence, read N- to C-terminus: ATP-dependent Clp protease proteolytic subunit (196 aa).

Catalysis depends on Ser-96, which acts as the Nucleophile. His-121 is an active-site residue.

The protein belongs to the peptidase S14 family. As to quaternary structure, fourteen ClpP subunits assemble into 2 heptameric rings which stack back to back to give a disk-like structure with a central cavity, resembling the structure of eukaryotic proteasomes.

It localises to the cytoplasm. The catalysed reaction is Hydrolysis of proteins to small peptides in the presence of ATP and magnesium. alpha-casein is the usual test substrate. In the absence of ATP, only oligopeptides shorter than five residues are hydrolyzed (such as succinyl-Leu-Tyr-|-NHMec, and Leu-Tyr-Leu-|-Tyr-Trp, in which cleavage of the -Tyr-|-Leu- and -Tyr-|-Trp bonds also occurs).. Its function is as follows. Cleaves peptides in various proteins in a process that requires ATP hydrolysis. Has a chymotrypsin-like activity. Plays a major role in the degradation of misfolded proteins. The protein is ATP-dependent Clp protease proteolytic subunit of Streptococcus thermophilus (strain CNRZ 1066).